A 2110-amino-acid chain; its full sequence is Protein Ycf2 (2110 aa).

1336–1343 serves as a coordination point for ATP; that stretch reads GSIGTGRS. The disordered stretch occupies residues 1852 to 1876; it reads EEEAELQDEEAELQDEGAGRKDEEA. The span at 1854–1866 shows a compositional bias: acidic residues; sequence EAELQDEEAELQD.

The protein belongs to the Ycf2 family.

The protein localises to the plastid. The protein resides in the chloroplast stroma. Functionally, probable ATPase of unknown function. Its presence in a non-photosynthetic plant (Epifagus virginiana) and experiments in tobacco indicate that it has an essential function which is probably not related to photosynthesis. The polypeptide is Protein Ycf2 (ycf2-A) (Pelargonium hortorum (Common geranium)).